A 97-amino-acid polypeptide reads, in one-letter code: Core protein A15 homolog (97 aa).

It belongs to the chordopoxvirinae A15 family. As to quaternary structure, part of a complex composed of A30, G7, F10 kinase, A15, D2, D3, and J1.

It is found in the host cytoplasm. Its subcellular location is the virion. Functionally, late protein which is a part of a large complex required for early virion morphogenesis. This complex participates in the formation of virosomes and the incorporation of virosomal contents into nascent immature virions. A15 is required for the stability and kinase activity of F10. This chain is Core protein A15 homolog, found in Vertebrata (FPV).